The sequence spans 1357 residues: DNA-directed RNA polymerase subunit beta (1357 aa).

The protein belongs to the RNA polymerase beta chain family. In terms of assembly, the RNAP catalytic core consists of 2 alpha, 1 beta, 1 beta' and 1 omega subunit. When a sigma factor is associated with the core the holoenzyme is formed, which can initiate transcription.

It catalyses the reaction RNA(n) + a ribonucleoside 5'-triphosphate = RNA(n+1) + diphosphate. In terms of biological role, DNA-dependent RNA polymerase catalyzes the transcription of DNA into RNA using the four ribonucleoside triphosphates as substrates. In Pseudomonas putida (strain ATCC 700007 / DSM 6899 / JCM 31910 / BCRC 17059 / LMG 24140 / F1), this protein is DNA-directed RNA polymerase subunit beta.